The primary structure comprises 238 residues: Enolase-phosphatase E1 (238 aa).

Residues Asp14 and Glu16 each contribute to the Mg(2+) site. Substrate is bound by residues 128 to 129 (SS) and Lys165. Asp192 serves as a coordination point for Mg(2+).

This sequence belongs to the HAD-like hydrolase superfamily. MasA/MtnC family. In terms of assembly, monomer. Requires Mg(2+) as cofactor.

It localises to the cytoplasm. It is found in the nucleus. The enzyme catalyses 5-methylsulfanyl-2,3-dioxopentyl phosphate + H2O = 1,2-dihydroxy-5-(methylsulfanyl)pent-1-en-3-one + phosphate. Its pathway is amino-acid biosynthesis; L-methionine biosynthesis via salvage pathway; L-methionine from S-methyl-5-thio-alpha-D-ribose 1-phosphate: step 3/6. It functions in the pathway amino-acid biosynthesis; L-methionine biosynthesis via salvage pathway; L-methionine from S-methyl-5-thio-alpha-D-ribose 1-phosphate: step 4/6. Bifunctional enzyme that catalyzes the enolization of 2,3-diketo-5-methylthiopentyl-1-phosphate (DK-MTP-1-P) into the intermediate 2-hydroxy-3-keto-5-methylthiopentenyl-1-phosphate (HK-MTPenyl-1-P), which is then dephosphorylated to form the acireductone 1,2-dihydroxy-3-keto-5-methylthiopentene (DHK-MTPene). This chain is Enolase-phosphatase E1, found in Fusarium vanettenii (strain ATCC MYA-4622 / CBS 123669 / FGSC 9596 / NRRL 45880 / 77-13-4) (Fusarium solani subsp. pisi).